Consider the following 616-residue polypeptide: Homeodomain-interacting protein kinase 4 (616 aa).

The Protein kinase domain maps to tyrosine 11 to valine 347. ATP-binding positions include leucine 17–valine 25 and lysine 40. Aspartate 136 functions as the Proton acceptor in the catalytic mechanism. Residues histidine 487 to histidine 616 are disordered. Residues lysine 497–serine 512 show a composition bias toward polar residues. Serine 512 is subject to Phosphoserine. Residues arginine 542–glycine 560 show a composition bias toward basic and acidic residues.

It belongs to the protein kinase superfamily. CMGC Ser/Thr protein kinase family. HIPK subfamily. Autophosphorylated. Expressed at moderate levels in lung and white adipose tissues and weakly in brain and liver.

The protein localises to the cytoplasm. The enzyme catalyses L-seryl-[protein] + ATP = O-phospho-L-seryl-[protein] + ADP + H(+). It catalyses the reaction L-threonyl-[protein] + ATP = O-phospho-L-threonyl-[protein] + ADP + H(+). Functionally, protein kinase that phosphorylates murine TP53 at Ser-9, and thus induces TP53 repression of BIRC5 promoter. May act as a corepressor of transcription factors (Potential). This Mus musculus (Mouse) protein is Homeodomain-interacting protein kinase 4 (Hipk4).